The primary structure comprises 513 residues: ATP synthase subunit alpha (513 aa).

169–176 (GDRQIGKT) serves as a coordination point for ATP.

Belongs to the ATPase alpha/beta chains family. F-type ATPases have 2 components, CF(1) - the catalytic core - and CF(0) - the membrane proton channel. CF(1) has five subunits: alpha(3), beta(3), gamma(1), delta(1), epsilon(1). CF(0) has three main subunits: a(1), b(2) and c(9-12). The alpha and beta chains form an alternating ring which encloses part of the gamma chain. CF(1) is attached to CF(0) by a central stalk formed by the gamma and epsilon chains, while a peripheral stalk is formed by the delta and b chains.

It is found in the cell inner membrane. The catalysed reaction is ATP + H2O + 4 H(+)(in) = ADP + phosphate + 5 H(+)(out). In terms of biological role, produces ATP from ADP in the presence of a proton gradient across the membrane. The alpha chain is a regulatory subunit. The sequence is that of ATP synthase subunit alpha from Shewanella woodyi (strain ATCC 51908 / MS32).